The sequence spans 392 residues: Chorismate synthase (392 aa).

NADP(+) is bound by residues Arg40 and Arg46. Residues Arg129–Ser131, Gln257–Ala258, Gly302, Lys317–Thr321, and Arg343 each bind FMN.

The protein belongs to the chorismate synthase family. As to quaternary structure, homotetramer. Requires FMNH2 as cofactor.

It carries out the reaction 5-O-(1-carboxyvinyl)-3-phosphoshikimate = chorismate + phosphate. The protein operates within metabolic intermediate biosynthesis; chorismate biosynthesis; chorismate from D-erythrose 4-phosphate and phosphoenolpyruvate: step 7/7. Its function is as follows. Catalyzes the anti-1,4-elimination of the C-3 phosphate and the C-6 proR hydrogen from 5-enolpyruvylshikimate-3-phosphate (EPSP) to yield chorismate, which is the branch point compound that serves as the starting substrate for the three terminal pathways of aromatic amino acid biosynthesis. This reaction introduces a second double bond into the aromatic ring system. This is Chorismate synthase from Chloroherpeton thalassium (strain ATCC 35110 / GB-78).